We begin with the raw amino-acid sequence, 21 residues long: Phospholipase A2 crotoxin basic chain (21 aa).

This sequence belongs to the phospholipase A2 family. Group II subfamily. Ca(2+) is required as a cofactor. In terms of tissue distribution, expressed by the venom gland.

The protein resides in the secreted. It catalyses the reaction a 1,2-diacyl-sn-glycero-3-phosphocholine + H2O = a 1-acyl-sn-glycero-3-phosphocholine + a fatty acid + H(+). Snake venom phospholipase A2 (PLA2) that induces a conspicuous local myotoxic effect and moderate footpad edema. In vitro, it shows anticoagulant effects and is not cytotoxic on myoblast but is able to lyse myotubes. PLA2 catalyzes the calcium-dependent hydrolysis of the 2-acyl groups in 3-sn-phosphoglycerides. The polypeptide is Phospholipase A2 crotoxin basic chain (Crotalus durissus cumanensis (South American rattlesnake)).